The following is a 558-amino-acid chain: Nuclear speckle splicing regulatory protein 1 (558 aa).

Residues 21-54 (PVLQKPSVFGNDSDDDDETSVSESLQREAAKKQA) are disordered. Ser-27 and Ser-33 each carry phosphoserine. A coiled-coil region spans residues 104–170 (IHNLLKAVEI…REKRAAALEA (67 aa)). Residues 106-170 (NLLKAVEIRK…REKRAAALEA (65 aa)) form a necessary for alternative splicing activity region. Residues Lys-199 and Lys-210 each participate in a glycyl lysine isopeptide (Lys-Gly) (interchain with G-Cter in SUMO2) cross-link. Positions 204–215 (EARSGIKEEKSR) are enriched in basic and acidic residues. Residues 204 to 534 (EARSGIKEEK…KRNNEETVMS (331 aa)) form a disordered region. Positions 216–226 (GFSNEVSSKNR) are enriched in polar residues. 3 positions are modified to phosphoserine: Ser-248, Ser-254, and Ser-255. The span at 250-280 (FDAKSSADDEIEETRVNCRREKVIETPENDF) shows a compositional bias: basic and acidic residues. Thr-275 carries the phosphothreonine modification. Residue Lys-281 forms a Glycyl lysine isopeptide (Lys-Gly) (interchain with G-Cter in SUMO2) linkage. Residues 299-310 (STRHHTKGSRTS) are compositionally biased toward basic residues. Basic and acidic residues-rich tracts occupy residues 311–442 (RGHE…KREV), 449–487 (RNQDRKESSPNSRAKDKFLDQERSNKMRNMAKDKERNQE), and 501–517 (RLTEEGQEKGKEQERPP). Residues 379-427 (KREKDREKYSQREQERDRQQNDQNRPSEKGEKEEKSKAKEEHMKVRKER) adopt a coiled-coil conformation. Ser-457 carries the post-translational modification Phosphoserine.

The protein belongs to the NSRP1 family. In terms of assembly, interacts (via C-terminus) with SRSF1. Interacts (via C-terminus) with SRSF2. Expressed in dendritic cells, T-cells, B-cells and natural killer cells. Expressed in secondary lymphoid organs such as spleen and mesenteric, axillary and brachial lymph nodes.

It localises to the nucleus. Its subcellular location is the nucleus speckle. Functionally, RNA-binding protein that mediates pre-mRNA alternative splicing regulation. In Homo sapiens (Human), this protein is Nuclear speckle splicing regulatory protein 1 (NSRP1).